The sequence spans 668 residues: MTTLQTNKDPHLRGVSPNPSKIPVLSQRCQDFSSVKSRSLDQENQDPRTPAQKPPRSTQRQRPLTDTAGLRSKTLHQTEKSPSLKTLRNPLEELKPSSGGSNVGLVTHPQTEAIGAIEFVADPAALATILSGEGVKSCPQGYRSSLAQRVLVRERKGGTTQRGQSARSSAYLAPRIPTHQVGPARASCFSRLEGPGLRDHTLSPPRLEALNPPPGSSHSSTRPSLQELRRETCGGGRDGDCTDRRTSASQASRLLLKTPVQPASLPLRGEQEAVPHSDDGGGRHHLGLAQRIPLKESLTNTRSTYSSMKRFAIRRKAQFTPLRSLPKVQQAQWLSGLSPHSSPEEPALPWRQIAMKLFDQESRITLQKEPRKPSVASTSGPRPKRTPSHQELRIQRINILQQLLQQEVEGLAMGDGAPLNGGSAFDMTELKLPTAEISRTLTASEHNSGAALVGLSQHSGATEPLLSEECEEPQAYPEETKAAQPCSTTELKPPVPHRAEPELPEPCLPALSGPPLPSCRGQAEPPMACPRTEPGASAACALEAGTPESSTQPCCNQGPPATASLTFSSQSPVCASPSIHSLYPTGYSGPSSLAPRTLALRQRLRACLDTIHSFQEAHLDDECAFYTSRAPPPGPTRVFTNPVVTTLEWQDALRFVPIGPVVPQDSPS.

3 disordered regions span residues 1–102, 154–177, and 189–285; these read MTTL…GGSN, ERKG…PRIP, and FSRL…GRHH. S16 is modified (phosphoserine). Polar residues-rich tracts occupy residues 27–37 and 55–64; these read QRCQDFSSVKS and PRSTQRQRPL. A Phosphoserine modification is found at S97. Residues 158–168 show a composition bias toward polar residues; sequence GTTQRGQSARS. S169 carries the post-translational modification Phosphoserine. Basic and acidic residues-rich tracts occupy residues 227–246 and 269–282; these read ELRR…DRRT and GEQE…DGGG. Phosphoserine occurs at positions 306, 324, and 338. Disordered stretches follow at residues 364 to 392 and 462 to 502; these read ITLQ…HQEL and TEPL…AEPE.

Directly binds bystin, and indirectly trophinin.

It localises to the cytoplasm. Its function is as follows. Could be involved with bystin and trophinin in a cell adhesion molecule complex that mediates an initial attachment of the blastocyst to uterine epithelial cells at the time of the embryo implantation. The chain is Tastin from Mus musculus (Mouse).